A 735-amino-acid polypeptide reads, in one-letter code: Protein-associating with the carboxyl-terminal domain of ezrin (735 aa).

Residue G2 is the site of N-myristoyl glycine attachment. The region spanning 2–245 (GSENSALKSY…LSTLLSHDFF (244 aa)) is the Protein kinase domain. 4 HEAT repeats span residues 194-249 (FGAL…RNDF), 285-323 (LIASRLVPLLLNQLVFAEPVAVKSFLPYLLGPKKENAPG), 333-370 (LFQSRVIPVLLRLFEVHEEHVRMVLLSHIEAYVEHFTQ), and 372-409 (QLKKVILPQVLLGLRDTSNSIVAITLRSLAVLVSLLGP). Phosphoserine is present on S439. 2 disordered regions span residues 505 to 545 (LSDV…ASIH) and 604 to 648 (VPLT…GLGL). Over residues 528–538 (WPDWSEPEEPE) the composition is skewed to acidic residues. The segment at 547-735 (WPREPCDVAE…EELAWEDNNW (189 aa)) is interaction with EZR. Position 701 is a phosphoserine (S701).

Belongs to the protein kinase superfamily. As to quaternary structure, interacts with EZR/VIL2 C-terminal domain. In terms of processing, may be myristoylated; myristoylation may target it to Golgi compartment.

The protein resides in the cytoplasm. Its subcellular location is the golgi apparatus. The protein localises to the cell projection. It localises to the lamellipodium. May play a role in regulating cell adhesion/migration complexes in migrating cells. In Mus musculus (Mouse), this protein is Protein-associating with the carboxyl-terminal domain of ezrin (Scyl3).